Here is a 263-residue protein sequence, read N- to C-terminus: Endonuclease 8 (263 aa).

The active-site Schiff-base intermediate with DNA is P2. The active-site Proton donor is E3. Catalysis depends on K53, which acts as the Proton donor; for beta-elimination activity. Positions 70, 125, and 169 each coordinate DNA. The FPG-type zinc finger occupies 229-263; that stretch reads KVFHRDGEACERCGGIIEKTTLSSRPFYWCAHCQK. The Proton donor; for delta-elimination activity role is filled by R253.

Belongs to the FPG family. Zn(2+) serves as cofactor.

It catalyses the reaction 2'-deoxyribonucleotide-(2'-deoxyribose 5'-phosphate)-2'-deoxyribonucleotide-DNA = a 3'-end 2'-deoxyribonucleotide-(2,3-dehydro-2,3-deoxyribose 5'-phosphate)-DNA + a 5'-end 5'-phospho-2'-deoxyribonucleoside-DNA + H(+). In terms of biological role, involved in base excision repair of DNA damaged by oxidation or by mutagenic agents. Acts as a DNA glycosylase that recognizes and removes damaged bases. Has a preference for oxidized pyrimidines, such as thymine glycol, 5,6-dihydrouracil and 5,6-dihydrothymine. Has AP (apurinic/apyrimidinic) lyase activity and introduces nicks in the DNA strand. Cleaves the DNA backbone by beta-delta elimination to generate a single-strand break at the site of the removed base with both 3'- and 5'-phosphates. The sequence is that of Endonuclease 8 from Salmonella typhi.